The following is a 214-amino-acid chain: Phosphatidylserine decarboxylase proenzyme (214 aa).

Catalysis depends on Ser-183, which acts as the Schiff-base intermediate with substrate; via pyruvic acid. Ser-183 carries the pyruvic acid (Ser); by autocatalysis modification.

The protein belongs to the phosphatidylserine decarboxylase family. PSD-A subfamily. Heterodimer of a large membrane-associated beta subunit and a small pyruvoyl-containing alpha subunit. The cofactor is pyruvate. In terms of processing, is synthesized initially as an inactive proenzyme. Formation of the active enzyme involves a self-maturation process in which the active site pyruvoyl group is generated from an internal serine residue via an autocatalytic post-translational modification. Two non-identical subunits are generated from the proenzyme in this reaction, and the pyruvate is formed at the N-terminus of the alpha chain, which is derived from the carboxyl end of the proenzyme. The post-translation cleavage follows an unusual pathway, termed non-hydrolytic serinolysis, in which the side chain hydroxyl group of the serine supplies its oxygen atom to form the C-terminus of the beta chain, while the remainder of the serine residue undergoes an oxidative deamination to produce ammonia and the pyruvoyl prosthetic group on the alpha chain.

It is found in the cell membrane. It carries out the reaction a 1,2-diacyl-sn-glycero-3-phospho-L-serine + H(+) = a 1,2-diacyl-sn-glycero-3-phosphoethanolamine + CO2. It participates in phospholipid metabolism; phosphatidylethanolamine biosynthesis; phosphatidylethanolamine from CDP-diacylglycerol: step 2/2. Its function is as follows. Catalyzes the formation of phosphatidylethanolamine (PtdEtn) from phosphatidylserine (PtdSer). The chain is Phosphatidylserine decarboxylase proenzyme from Desulfotalea psychrophila (strain LSv54 / DSM 12343).